Here is a 147-residue protein sequence, read N- to C-terminus: Interleukin-4 (147 aa).

The N-terminal stretch at 1 to 24 is a signal peptide; that stretch reads MGLSPHLAVTLFCFLICTGNGIHG. C47 and C87 are joined by a disulfide. N-linked (GlcNAc...) asparagine glycans are attached at residues N61, N90, and N117.

This sequence belongs to the IL-4/IL-13 family.

The protein resides in the secreted. Functionally, participates in at least several B-cell activation processes as well as of other cell types. It is a costimulator of DNA-synthesis. It induces the expression of class II MHC molecules on resting B-cells. It enhances both secretion and cell surface expression of IgE and IgG1. It also regulates the expression of the low affinity Fc receptor for IgE (CD23) on both lymphocytes and monocytes. Positively regulates IL31RA expression in macrophages. Stimulates autophagy in dendritic cells by interfering with mTORC1 signaling and through the induction of RUFY4. This chain is Interleukin-4 (Il4), found in Rattus norvegicus (Rat).